The sequence spans 467 residues: Putative ankyrin repeat protein R911 (467 aa).

14 ANK repeats span residues 38-70 (IKTD…PIIV), 79-108 (TLNK…DIRA), 109-138 (GNDY…DIRA), 140-168 (NDYA…NIRA), 170-198 (NDHA…DIRS), 199-228 (DNDY…NIRS), 229-258 (DNDY…DIKS), 260-288 (NDYA…NIRV), 289-318 (NNNY…DIIA), 320-348 (NNFA…DIKS), 350-378 (NDYA…DIRV), 379-408 (ENDY…DIRS), 410-438 (NDYA…DIKA), and 440-467 (DDYA…AVLS).

The protein is Putative ankyrin repeat protein R911 of Acanthamoeba polyphaga mimivirus (APMV).